The chain runs to 222 residues: Ribosomal RNA small subunit methyltransferase G (222 aa).

Residues G84, F89, V141–E142, and R154 each bind S-adenosyl-L-methionine.

The protein belongs to the methyltransferase superfamily. RNA methyltransferase RsmG family.

It localises to the cytoplasm. The catalysed reaction is guanosine(527) in 16S rRNA + S-adenosyl-L-methionine = N(7)-methylguanosine(527) in 16S rRNA + S-adenosyl-L-homocysteine. Its function is as follows. Specifically methylates the N7 position of guanine in position 527 of 16S rRNA. In Bradyrhizobium sp. (strain BTAi1 / ATCC BAA-1182), this protein is Ribosomal RNA small subunit methyltransferase G.